Consider the following 303-residue polypeptide: Peptidyl-prolyl isomerase CWC27 (303 aa).

Residues 7–153 (ASGKCVLYTT…AEVTIPYFDG (147 aa)) enclose the PPIase cyclophilin-type domain. 2 disordered regions span residues 155–195 (SGQK…PPLD) and 208–274 (ERLT…TDLA).

It belongs to the cyclophilin-type PPIase family. CWC27 subfamily. In terms of assembly, associated with the spliceosome.

It localises to the cytoplasm. It is found in the nucleus. It catalyses the reaction [protein]-peptidylproline (omega=180) = [protein]-peptidylproline (omega=0). PPIases accelerate the folding of proteins. It catalyzes the cis-trans isomerization of proline imidic peptide bonds in oligopeptides. Involved in pre-mRNA splicing. This Eremothecium gossypii (strain ATCC 10895 / CBS 109.51 / FGSC 9923 / NRRL Y-1056) (Yeast) protein is Peptidyl-prolyl isomerase CWC27 (CWC27).